The following is a 132-amino-acid chain: MSKTLNIIWQYLRAFVLIYACLYAGIFIASLLPVTIPGSIIGMLILFVLLALQILPAKWVNPGCYVLIRYMALLFVPIGVGVMQYFDLLRAQFGPVVVSCAVCTLVVFLVVSWSSQLVHGERKVVGQKGSEE.

The next 4 membrane-spanning stretches (helical) occupy residues 7–27, 31–51, 63–83, and 93–113; these read IIWQYLRAFVLIYACLYAGIF, LLPVTIPGSIIGMLILFVLLA, GCYVLIRYMALLFVPIGVGVM, and FGPVVVSCAVCTLVVFLVVSW.

This sequence belongs to the UPF0299 family.

The protein localises to the cell inner membrane. This Shigella boydii serotype 18 (strain CDC 3083-94 / BS512) protein is UPF0299 membrane protein YohJ.